A 37-amino-acid polypeptide reads, in one-letter code: Large ribosomal subunit protein bL36 (37 aa).

It belongs to the bacterial ribosomal protein bL36 family.

This is Large ribosomal subunit protein bL36 from Cyanothece sp. (strain PCC 7425 / ATCC 29141).